Consider the following 669-residue polypeptide: DNA ligase (669 aa).

NAD(+) contacts are provided by residues 34–38 (DAEYD), 83–84 (SL), and Glu114. Residue Lys116 is the N6-AMP-lysine intermediate of the active site. 4 residues coordinate NAD(+): Arg137, Glu171, Lys287, and Lys311. Residues Cys405, Cys408, Cys423, and Cys428 each coordinate Zn(2+). Residues 591–669 (NVESYFAGKT…EERFLQELNK (79 aa)) form the BRCT domain.

The protein belongs to the NAD-dependent DNA ligase family. LigA subfamily. Mg(2+) serves as cofactor. The cofactor is Mn(2+).

It catalyses the reaction NAD(+) + (deoxyribonucleotide)n-3'-hydroxyl + 5'-phospho-(deoxyribonucleotide)m = (deoxyribonucleotide)n+m + AMP + beta-nicotinamide D-nucleotide.. In terms of biological role, DNA ligase that catalyzes the formation of phosphodiester linkages between 5'-phosphoryl and 3'-hydroxyl groups in double-stranded DNA using NAD as a coenzyme and as the energy source for the reaction. It is essential for DNA replication and repair of damaged DNA. The chain is DNA ligase from Bacillus anthracis (strain A0248).